Reading from the N-terminus, the 526-residue chain is Peptide chain release factor 3 (526 aa).

Residues 9-277 (DKRRTFAIIS…GIVEWAPVPQ (269 aa)) enclose the tr-type G domain. GTP is bound by residues 18 to 25 (SHPDAGKT), 86 to 90 (DTPGH), and 140 to 143 (NKLD).

It belongs to the TRAFAC class translation factor GTPase superfamily. Classic translation factor GTPase family. PrfC subfamily.

Its subcellular location is the cytoplasm. Functionally, increases the formation of ribosomal termination complexes and stimulates activities of RF-1 and RF-2. It binds guanine nucleotides and has strong preference for UGA stop codons. It may interact directly with the ribosome. The stimulation of RF-1 and RF-2 is significantly reduced by GTP and GDP, but not by GMP. The chain is Peptide chain release factor 3 from Shewanella pealeana (strain ATCC 700345 / ANG-SQ1).